A 291-amino-acid polypeptide reads, in one-letter code: Ribosomal RNA small subunit methyltransferase H (291 aa).

S-adenosyl-L-methionine-binding positions include 31-33 (GGY), Asp-49, Phe-76, Asp-97, and Gln-104.

The protein belongs to the methyltransferase superfamily. RsmH family.

The protein localises to the cytoplasm. The catalysed reaction is cytidine(1402) in 16S rRNA + S-adenosyl-L-methionine = N(4)-methylcytidine(1402) in 16S rRNA + S-adenosyl-L-homocysteine + H(+). Specifically methylates the N4 position of cytidine in position 1402 (C1402) of 16S rRNA. This Anaplasma marginale (strain Florida) protein is Ribosomal RNA small subunit methyltransferase H.